We begin with the raw amino-acid sequence, 156 residues long: ATP synthase subunit b (156 aa).

A helical membrane pass occupies residues 5-27 (ITLIGQMITFAIFVGFTMKFVWP).

It belongs to the ATPase B chain family. In terms of assembly, F-type ATPases have 2 components, F(1) - the catalytic core - and F(0) - the membrane proton channel. F(1) has five subunits: alpha(3), beta(3), gamma(1), delta(1), epsilon(1). F(0) has three main subunits: a(1), b(2) and c(10-14). The alpha and beta chains form an alternating ring which encloses part of the gamma chain. F(1) is attached to F(0) by a central stalk formed by the gamma and epsilon chains, while a peripheral stalk is formed by the delta and b chains.

The protein resides in the cell inner membrane. In terms of biological role, f(1)F(0) ATP synthase produces ATP from ADP in the presence of a proton or sodium gradient. F-type ATPases consist of two structural domains, F(1) containing the extramembraneous catalytic core and F(0) containing the membrane proton channel, linked together by a central stalk and a peripheral stalk. During catalysis, ATP synthesis in the catalytic domain of F(1) is coupled via a rotary mechanism of the central stalk subunits to proton translocation. Its function is as follows. Component of the F(0) channel, it forms part of the peripheral stalk, linking F(1) to F(0). The protein is ATP synthase subunit b of Francisella tularensis subsp. tularensis (strain SCHU S4 / Schu 4).